The following is a 261-amino-acid chain: NAD-capped RNA hydrolase NudC (261 aa).

Arginine 74 is a substrate binding site. Residues cysteine 103, cysteine 106, cysteine 121, and cysteine 124 each contribute to the Zn(2+) site. Residue tyrosine 129 coordinates substrate. The region spanning 130–253 (PRIFPCIIVA…TIARALIEQT (124 aa)) is the Nudix hydrolase domain. A divalent metal cation-binding residues include alanine 163, glutamate 179, and glutamate 183. Residues 164–185 (GFVEVGETLEQCVAREVKEETG) carry the Nudix box motif. 197–204 (QPWAFPSS) is a substrate binding site. Residue glutamate 224 participates in a divalent metal cation binding. Alanine 246 is a substrate binding site.

The protein belongs to the Nudix hydrolase family. NudC subfamily. In terms of assembly, homodimer. Mg(2+) is required as a cofactor. Mn(2+) serves as cofactor. It depends on Zn(2+) as a cofactor.

It carries out the reaction a 5'-end NAD(+)-phospho-ribonucleoside in mRNA + H2O = a 5'-end phospho-adenosine-phospho-ribonucleoside in mRNA + beta-nicotinamide D-ribonucleotide + 2 H(+). It catalyses the reaction NAD(+) + H2O = beta-nicotinamide D-ribonucleotide + AMP + 2 H(+). The catalysed reaction is NADH + H2O = reduced beta-nicotinamide D-ribonucleotide + AMP + 2 H(+). MRNA decapping enzyme that specifically removes the nicotinamide adenine dinucleotide (NAD) cap from a subset of mRNAs by hydrolyzing the diphosphate linkage to produce nicotinamide mononucleotide (NMN) and 5' monophosphate mRNA. The NAD-cap is present at the 5'-end of some mRNAs and stabilizes RNA against 5'-processing. Has preference for mRNAs with a 5'-end purine. Catalyzes the hydrolysis of a broad range of dinucleotide pyrophosphates. This is NAD-capped RNA hydrolase NudC from Vibrio vulnificus (strain CMCP6).